The chain runs to 208 residues: UPF0323 lipoprotein HH_0014 (208 aa).

The first 26 residues, 1–26 (MKHIHKIKNYAMVGGLGVMAVFALNA), serve as a signal peptide directing secretion. Residue cysteine 27 is the site of N-palmitoyl cysteine attachment. Cysteine 27 carries S-diacylglycerol cysteine lipidation. The tract at residues 148 to 208 (ANSQRNYKSP…TNRNTGSMGS (61 aa)) is disordered. Composition is skewed to low complexity over residues 169-185 (SAKT…SGKS) and 193-208 (SSQS…SMGS).

The protein belongs to the UPF0323 family.

The protein resides in the cell membrane. The sequence is that of UPF0323 lipoprotein HH_0014 from Helicobacter hepaticus (strain ATCC 51449 / 3B1).